Reading from the N-terminus, the 166-residue chain is Large ribosomal subunit protein uL10 (166 aa).

This sequence belongs to the universal ribosomal protein uL10 family. In terms of assembly, part of the ribosomal stalk of the 50S ribosomal subunit. The N-terminus interacts with L11 and the large rRNA to form the base of the stalk. The C-terminus forms an elongated spine to which L12 dimers bind in a sequential fashion forming a multimeric L10(L12)X complex.

Functionally, forms part of the ribosomal stalk, playing a central role in the interaction of the ribosome with GTP-bound translation factors. The chain is Large ribosomal subunit protein uL10 from Shewanella oneidensis (strain ATCC 700550 / JCM 31522 / CIP 106686 / LMG 19005 / NCIMB 14063 / MR-1).